The primary structure comprises 656 residues: MSYQRNSARASLDLRSQYQQLEGRMRSEHFNPAYQQQQQKGQNIPLSLPSSLAQRNPIPYPIDAVTSDPTIPAQLNVYDHDRQNSIVDAAAGTNTTHSLNSNNIPSSQNNNINNNNINNVGSFTDPSMLTLPKMSLHSHQKQYDSNQNDPRSPLAILIPTSAQPTDVLSARFSAWRNVIRAILVYLSETASIQDEIVRQQLRLSHAVQFPFFSIENQYQPVSNEDKSMQKFFLPLGSGSVQDLPTMLTKYHDNLASLASKSSKELTSEIIPRLEDLRRDLLVKIKEIKALQSDFKNSCNKELQQTKHLMKLFNESLKECKLGTPKSDPFLIKLQLEKQIKRQLVEENYLHEAFDNLQNSGAQLESVIVMEIQNGLTSYARILGKEAQVVFDSVISKLDSTILNKNTNLEWDSFILRNISNFVPPNLPMRRFKEISYSNQNDPFTFEVKSGFLEKRSKFLKSYSRGFYVLTPSFLHEFKTPDKHKFSTPLMSIPLVECTVTEHSKKTKSNSEQGKNKFILRTNSNGLIHRGHNWVFKVDSYDDMIEWFGNIKALSSLPNYDDKCKYVSKVAKLSKEKAKSNENTTESVTPQVTNEQHTRYDDVSSSNFPLNSIPKLDNLTITNTTSSIPETNDSQIQNRVPEFYIENVDSPRKSNQL.

Residues 445 to 555 enclose the PH domain; sequence FEVKSGFLEK…WFGNIKALSS (111 aa). Residues 577 to 605 are disordered; sequence AKSNENTTESVTPQVTNEQHTRYDDVSSS. Over residues 580–594 the composition is skewed to polar residues; it reads NENTTESVTPQVTNE. Serine 626 is modified (phosphoserine). The short motif at 640 to 645 is the PXIXIT-like, required for interaction with CNA1 and CNA2, and calcineurin-dependent dephosphorylation element; the sequence is PEFYIE. Phosphoserine occurs at positions 649 and 653.

In terms of assembly, heterodimer of SLM1-SLM2. Binds phosphatidylinositol 4,5-bisphosphate, which is required for function. Interacts with the TORC2 subunits AVO2, BIT61 and TOR2. Interacts with the calcineurin catalytic subunits CNA1 and CNA2.

Its subcellular location is the cell membrane. Together with SLM1, effector of the TORC2- and calcineurin-signaling pathways. Phosphorylated and activated by TORC2 under favorable growth conditions. Mediates actin polarization via inhibition of calcineurin-dependent transcription. Upon nutrient limitation or environmental stress, gets dephosphorylated by calcineurin, inhibiting interaction with TORC2, thereby antagonizing TORC2 signaling and mediating calcineurin-dependent actin depolarization. Also functions in heat-induced, calcineurin-mediated uracil permease (FUR4) endocytosis. The polypeptide is Phosphatidylinositol 4,5-bisphosphate-binding protein SLM2 (SLM2) (Saccharomyces cerevisiae (strain ATCC 204508 / S288c) (Baker's yeast)).